The chain runs to 345 residues: NADH-ubiquinone oxidoreductase chain 2 (345 aa).

The next 10 helical transmembrane spans lie at 1–21 (MNPL…ILTT), 26–46 (WVSA…IISM), 60–80 (FLIQ…NAHL), 96–115 (IALT…HFWL), 122–144 (VPIL…LLIM), 148–170 (LIPT…LGGL), 201–223 (TLLN…HLTM), 242–262 (SLFL…GFIP), 274–294 (NLTP…MFYL), and 323–343 (TSTL…TPTL).

The protein belongs to the complex I subunit 2 family.

The protein resides in the mitochondrion inner membrane. The enzyme catalyses a ubiquinone + NADH + 5 H(+)(in) = a ubiquinol + NAD(+) + 4 H(+)(out). Core subunit of the mitochondrial membrane respiratory chain NADH dehydrogenase (Complex I) that is believed to belong to the minimal assembly required for catalysis. Complex I functions in the transfer of electrons from NADH to the respiratory chain. The immediate electron acceptor for the enzyme is believed to be ubiquinone. This is NADH-ubiquinone oxidoreductase chain 2 (MT-ND2) from Varanus nebulosus (Clouded monitor).